Here is a 245-residue protein sequence, read N- to C-terminus: 1-(5-phosphoribosyl)-5-[(5-phosphoribosylamino)methylideneamino] imidazole-4-carboxamide isomerase (245 aa).

The active-site Proton acceptor is D7. The active-site Proton donor is D129.

This sequence belongs to the HisA/HisF family.

Its subcellular location is the cytoplasm. The enzyme catalyses 1-(5-phospho-beta-D-ribosyl)-5-[(5-phospho-beta-D-ribosylamino)methylideneamino]imidazole-4-carboxamide = 5-[(5-phospho-1-deoxy-D-ribulos-1-ylimino)methylamino]-1-(5-phospho-beta-D-ribosyl)imidazole-4-carboxamide. The protein operates within amino-acid biosynthesis; L-histidine biosynthesis; L-histidine from 5-phospho-alpha-D-ribose 1-diphosphate: step 4/9. This chain is 1-(5-phosphoribosyl)-5-[(5-phosphoribosylamino)methylideneamino] imidazole-4-carboxamide isomerase, found in Escherichia coli O45:K1 (strain S88 / ExPEC).